We begin with the raw amino-acid sequence, 380 residues long: Queuine tRNA-ribosyltransferase (380 aa).

D96 (proton acceptor) is an active-site residue. Substrate is bound by residues D96–F100, D150, Q193, and G220. Positions G251–S257 are RNA binding. Catalysis depends on D270, which acts as the Nucleophile. An RNA binding; important for wobble base 34 recognition region spans residues T275–R279. Residues C308, C310, C313, and H339 each contribute to the Zn(2+) site.

It belongs to the queuine tRNA-ribosyltransferase family. Homodimer. Within each dimer, one monomer is responsible for RNA recognition and catalysis, while the other monomer binds to the replacement base PreQ1. Requires Zn(2+) as cofactor.

It catalyses the reaction 7-aminomethyl-7-carbaguanine + guanosine(34) in tRNA = 7-aminomethyl-7-carbaguanosine(34) in tRNA + guanine. It functions in the pathway tRNA modification; tRNA-queuosine biosynthesis. Catalyzes the base-exchange of a guanine (G) residue with the queuine precursor 7-aminomethyl-7-deazaguanine (PreQ1) at position 34 (anticodon wobble position) in tRNAs with GU(N) anticodons (tRNA-Asp, -Asn, -His and -Tyr). Catalysis occurs through a double-displacement mechanism. The nucleophile active site attacks the C1' of nucleotide 34 to detach the guanine base from the RNA, forming a covalent enzyme-RNA intermediate. The proton acceptor active site deprotonates the incoming PreQ1, allowing a nucleophilic attack on the C1' of the ribose to form the product. After dissociation, two additional enzymatic reactions on the tRNA convert PreQ1 to queuine (Q), resulting in the hypermodified nucleoside queuosine (7-(((4,5-cis-dihydroxy-2-cyclopenten-1-yl)amino)methyl)-7-deazaguanosine). The sequence is that of Queuine tRNA-ribosyltransferase from Streptococcus pneumoniae (strain P1031).